A 449-amino-acid chain; its full sequence is GTPase Der (449 aa).

EngA-type G domains are found at residues 4 to 174 (PIVA…PPKT) and 183 to 358 (LRVA…AQRQ). GTP is bound by residues 10-17 (GRPNVGKS), 57-61 (DTAGL), 126-129 (NKCD), 189-196 (GRPNVGKS), 236-240 (DTAGI), and 301-304 (NKWD). Positions 359–444 (KRIPTSELNN…PIVIVFRSRE (86 aa)) constitute a KH-like domain.

It belongs to the TRAFAC class TrmE-Era-EngA-EngB-Septin-like GTPase superfamily. EngA (Der) GTPase family. In terms of assembly, associates with the 50S ribosomal subunit.

In terms of biological role, GTPase that plays an essential role in the late steps of ribosome biogenesis. The polypeptide is GTPase Der (Chloroflexus aggregans (strain MD-66 / DSM 9485)).